The primary structure comprises 291 residues: MAALQEKKTCGQRMEEFQRYCWNPDTGQMLGRTLSRWVWISLYYVAFYVVMTGLFALCLYVLMQTVDPYTPDYQDQLRSPGVTLRPDVYGEKGLEIVYNVSDNRTWADLTQTLHAFLAGYSPAAQEDSINCTSEQYFFQESFRAPNHTKFSCKFTADMLQNCSGLADPNFGFEEGKPCFIIKMNRIVKFLPSNGSAPRVDCAFLDQPRELGQPLQVKYYPPNGTFSLHYFPYYGKKAQPHYSNPLVAAKLLNIPRNAEVAIVCKVMAEHVTFNNPHDPYEGKVEFKLKIEK.

The Cytoplasmic portion of the chain corresponds to 1-36 (MAALQEKKTCGQRMEEFQRYCWNPDTGQMLGRTLSR). The chain crosses the membrane as a helical; Signal-anchor for type II membrane protein span at residues 37–57 (WVWISLYYVAFYVVMTGLFAL). Over 58–291 (CLYVLMQTVD…KVEFKLKIEK (234 aa)) the chain is Extracellular. N99, N103, N130, N146, and N161 each carry an N-linked (GlcNAc...) asparagine glycan. C131 and C152 form a disulfide bridge. C162 and C178 are joined by a disulfide. N-linked (GlcNAc...) asparagine glycans are attached at residues N193 and N222. Positions 194–291 (GSAPRVDCAF…KVEFKLKIEK (98 aa)) are immunoglobulin-like. An intrachain disulfide couples C201 to C263.

Belongs to the X(+)/potassium ATPases subunit beta family. In terms of assembly, the ATPase pump is composed of two subunits: alpha (catalytic) and beta (regulatory). Interacts with alpha subunit ATP12A; this interaction is required for the formation of a functionally active pump and targeting at the plasma membrane. Interacts (via N-terminus) with alpha subunit ATP4A (via the P-domain). Post-translationally, N-glycosylation is necessary for assembly and functional expression of the pump at the plasma membrane.

It is found in the apical cell membrane. The protein resides in the cell membrane. Functionally, the beta subunit of the gastric H(+)/K(+) ATPase pump which transports H(+) ions in exchange for K(+) ions across the apical membrane of parietal cells. Plays a structural and regulatory role in the assembly and membrane targeting of a functionally active pump. Within a transport cycle, the transfer of a H(+) ion across the membrane is coupled to ATP hydrolysis and is associated with a transient phosphorylation of the alpha subunit that shifts the pump conformation from inward-facing (E1) to outward-facing state (E2). Interacts with the phosphorylation domain of the alpha subunit and functions as a ratchet, stabilizing the lumenal-open E2 conformation and preventing the reverse reaction of the transport cycle. The protein is Potassium-transporting ATPase subunit beta of Homo sapiens (Human).